A 530-amino-acid chain; its full sequence is UDP-N-acetylmuramoyl-L-alanyl-D-glutamate--2,6-diaminopimelate ligase (530 aa).

UDP-N-acetyl-alpha-D-muramoyl-L-alanyl-D-glutamate is bound at residue Ser21. ATP is bound at residue Gly99–Ser105. Residues Thr145–Thr146, Ser172, Gln178, and Arg180 contribute to the UDP-N-acetyl-alpha-D-muramoyl-L-alanyl-D-glutamate site. Lys212 carries the post-translational modification N6-carboxylysine. In terms of domain architecture, RPE1 insert spans Phe221–Leu269. Residues Arg422, Asp446–Arg449, Gly496, and Glu500 contribute to the meso-2,6-diaminopimelate site. The Meso-diaminopimelate recognition motif signature appears at Asp446–Arg449.

This sequence belongs to the MurCDEF family. MurE subfamily. Mg(2+) serves as cofactor. Post-translationally, carboxylation is probably crucial for Mg(2+) binding and, consequently, for the gamma-phosphate positioning of ATP.

The protein localises to the cytoplasm. The catalysed reaction is UDP-N-acetyl-alpha-D-muramoyl-L-alanyl-D-glutamate + meso-2,6-diaminopimelate + ATP = UDP-N-acetyl-alpha-D-muramoyl-L-alanyl-gamma-D-glutamyl-meso-2,6-diaminopimelate + ADP + phosphate + H(+). The protein operates within cell wall biogenesis; peptidoglycan biosynthesis. Functionally, catalyzes the addition of meso-diaminopimelic acid to the nucleotide precursor UDP-N-acetylmuramoyl-L-alanyl-D-glutamate (UMAG) in the biosynthesis of bacterial cell-wall peptidoglycan. The chain is UDP-N-acetylmuramoyl-L-alanyl-D-glutamate--2,6-diaminopimelate ligase from Rickettsia felis (strain ATCC VR-1525 / URRWXCal2) (Rickettsia azadi).